A 103-amino-acid chain; its full sequence is Large ribosomal subunit protein uL24 (103 aa).

This sequence belongs to the universal ribosomal protein uL24 family. Part of the 50S ribosomal subunit.

Its function is as follows. One of two assembly initiator proteins, it binds directly to the 5'-end of the 23S rRNA, where it nucleates assembly of the 50S subunit. In terms of biological role, one of the proteins that surrounds the polypeptide exit tunnel on the outside of the subunit. The chain is Large ribosomal subunit protein uL24 from Brucella ovis (strain ATCC 25840 / 63/290 / NCTC 10512).